A 279-amino-acid polypeptide reads, in one-letter code: ATP synthase gamma chain (279 aa).

The protein belongs to the ATPase gamma chain family. In terms of assembly, F-type ATPases have 2 components, CF(1) - the catalytic core - and CF(0) - the membrane proton channel. CF(1) has five subunits: alpha(3), beta(3), gamma(1), delta(1), epsilon(1). CF(0) has three main subunits: a, b and c.

The protein localises to the cell membrane. In terms of biological role, produces ATP from ADP in the presence of a proton gradient across the membrane. The gamma chain is believed to be important in regulating ATPase activity and the flow of protons through the CF(0) complex. The protein is ATP synthase gamma chain of Mycoplasma pneumoniae (strain ATCC 29342 / M129 / Subtype 1) (Mycoplasmoides pneumoniae).